We begin with the raw amino-acid sequence, 744 residues long: Tripartite motif-containing protein 2 (744 aa).

A Phosphoserine modification is found at S10. Residues C23–R64 form an RING-type zinc finger. The B box-type zinc finger occupies G113–L154. Zn(2+)-binding residues include C118, H121, C141, and H146. A Filamin repeat occupies T320–V421. T371 carries the phosphothreonine modification. A phosphoserine mark is found at S375, S424, and S428. The tract at residues E432–K462 is disordered. 6 NHL repeats span residues I473 to D516, K520 to D563, G564 to N605, V609 to E652, M656 to S699, and G700 to L743.

It belongs to the TRIM/RBCC family. As to quaternary structure, forms homooligomers. Interacts with TRIM3; this interaction reduces TRIM2 activity. Interacts with myosin V; myosin V may not be a substrate for ubiquitination. Interacts with NEFL. Interacts with phosphorylated BCL2L11. Interacts with SIRPA. RING-type zinc finger-dependent and UBE2D1-dependent autoubiquitination.

The catalysed reaction is S-ubiquitinyl-[E2 ubiquitin-conjugating enzyme]-L-cysteine + [acceptor protein]-L-lysine = [E2 ubiquitin-conjugating enzyme]-L-cysteine + N(6)-ubiquitinyl-[acceptor protein]-L-lysine.. It participates in protein modification; protein ubiquitination. Functionally, UBE2D1-dependent E3 ubiquitin-protein ligase that mediates the ubiquitination of NEFL and of phosphorylated BCL2L11. Plays a neuroprotective function. May play a role in neuronal rapid ischemic tolerance. Plays a role in antiviral immunity and limits New World arenavirus infection independently of its ubiquitin ligase activity. The chain is Tripartite motif-containing protein 2 (Trim2) from Rattus norvegicus (Rat).